The following is a 432-amino-acid chain: 2-oxoglutarate-dependent dioxygenase AOP2 (432 aa).

In terms of domain architecture, Fe2OG dioxygenase spans 281–378; the sequence is SGDDVEANDD…RYTAAIFTCP (98 aa). H301, D303, and H358 together coordinate Fe cation. R369 contacts 2-oxoglutarate.

The protein belongs to the iron/ascorbate-dependent oxidoreductase family. Requires Fe(2+) as cofactor.

Functionally, 2-oxoglutarate-dependent dioxygenase involved in glucosinolates biosynthesis. Catalyzes the conversion of methylsulfinylalkyl glucosinolates to alkenyl glucosinolates. This chain is 2-oxoglutarate-dependent dioxygenase AOP2 (AOP2), found in Arabidopsis thaliana (Mouse-ear cress).